The sequence spans 234 residues: Ubiquitin carboxyl-terminal hydrolase 3 (234 aa).

The UCH catalytic domain occupies 12–232; it reads RWLPLESNPD…LNFNLIAISK (221 aa). The active-site Nucleophile is Cys101. His172 serves as the catalytic Proton donor.

It belongs to the peptidase C12 family.

It carries out the reaction Thiol-dependent hydrolysis of ester, thioester, amide, peptide and isopeptide bonds formed by the C-terminal Gly of ubiquitin (a 76-residue protein attached to proteins as an intracellular targeting signal).. This is Ubiquitin carboxyl-terminal hydrolase 3 from Arabidopsis thaliana (Mouse-ear cress).